A 228-amino-acid chain; its full sequence is Triosephosphate isomerase (228 aa).

A substrate-binding site is contributed by 12–14; that stretch reads NFK. H96 acts as the Electrophile in catalysis. E144 (proton acceptor) is an active-site residue. Residues I149, G184, and 205 to 206 contribute to the substrate site; that span reads AS.

Belongs to the triosephosphate isomerase family. Homotetramer; dimer of dimers.

It localises to the cytoplasm. It carries out the reaction D-glyceraldehyde 3-phosphate = dihydroxyacetone phosphate. It participates in carbohydrate biosynthesis; gluconeogenesis. It functions in the pathway carbohydrate degradation; glycolysis; D-glyceraldehyde 3-phosphate from glycerone phosphate: step 1/1. Involved in the gluconeogenesis. Catalyzes stereospecifically the conversion of dihydroxyacetone phosphate (DHAP) to D-glyceraldehyde-3-phosphate (G3P). In Pyrococcus furiosus (strain ATCC 43587 / DSM 3638 / JCM 8422 / Vc1), this protein is Triosephosphate isomerase.